Consider the following 214-residue polypeptide: Adenylate kinase (214 aa).

10–15 (GAGKGT) lines the ATP pocket. The segment at 30-59 (STGDMLRAAVKAQTPVGLKAKAVMDRGELV) is NMP. AMP-binding positions include Thr31, Arg36, 57 to 59 (ELV), 85 to 88 (GYPR), and Gln92. Positions 126–163 (GRFTCAKCGTGYHDRHKQPAREGVCDVCGSTEFKRRPD) are LID. An ATP-binding site is contributed by Arg127. Zn(2+)-binding residues include Cys130, Cys133, Cys150, and Cys153. Arg160 and Arg172 together coordinate AMP. Gly200 is an ATP binding site.

The protein belongs to the adenylate kinase family. Monomer.

Its subcellular location is the cytoplasm. It catalyses the reaction AMP + ATP = 2 ADP. The protein operates within purine metabolism; AMP biosynthesis via salvage pathway; AMP from ADP: step 1/1. Functionally, catalyzes the reversible transfer of the terminal phosphate group between ATP and AMP. Plays an important role in cellular energy homeostasis and in adenine nucleotide metabolism. The protein is Adenylate kinase of Erythrobacter litoralis (strain HTCC2594).